The chain runs to 214 residues: Dephospho-CoA kinase (214 aa).

The region spanning 4 to 204 (IVGLTGGIGS…QRYLQLAQQK (201 aa)) is the DPCK domain. 12 to 17 (GSGKST) provides a ligand contact to ATP.

Belongs to the CoaE family.

Its subcellular location is the cytoplasm. It catalyses the reaction 3'-dephospho-CoA + ATP = ADP + CoA + H(+). Its pathway is cofactor biosynthesis; coenzyme A biosynthesis; CoA from (R)-pantothenate: step 5/5. Its function is as follows. Catalyzes the phosphorylation of the 3'-hydroxyl group of dephosphocoenzyme A to form coenzyme A. This Mannheimia succiniciproducens (strain KCTC 0769BP / MBEL55E) protein is Dephospho-CoA kinase.